The chain runs to 227 residues: Flagellar L-ring protein (227 aa).

The first 16 residues, 1–16 (MRNIILFAAGTLLLSG), serve as a signal peptide directing secretion. C17 carries N-palmitoyl cysteine lipidation. C17 carries the S-diacylglycerol cysteine lipid modification.

The protein belongs to the FlgH family. As to quaternary structure, the basal body constitutes a major portion of the flagellar organelle and consists of four rings (L,P,S, and M) mounted on a central rod.

It localises to the cell outer membrane. The protein localises to the bacterial flagellum basal body. In terms of biological role, assembles around the rod to form the L-ring and probably protects the motor/basal body from shearing forces during rotation. This chain is Flagellar L-ring protein, found in Pseudoalteromonas translucida (strain TAC 125).